Consider the following 283-residue polypeptide: MIINNNKLAELSSQRVNGLGGLSIHFKDGRSRISRLYQEGAAKIRMPQVGGDPLEAILINTSGGLTGGDRLQWDVELGENASAVITTQACERIYRSGGGEARIATRLKAAKGTRLAWLPQETILFNQSVLSRTLDVELEEGAEILVVEATIFGRLAMGERVDEAMFSDRWRVRLGGRPDGRLVHAEEFRLGPDIGAELQARPVADAACAVATVLLISGEAGKHLEAARQIIGEEGGASLWQVGPATKLMMRLHAPDSYTLRKRLGPLLALLNGKAGLPKVWTF.

This sequence belongs to the UreD family. In terms of assembly, ureD, UreF and UreG form a complex that acts as a GTP-hydrolysis-dependent molecular chaperone, activating the urease apoprotein by helping to assemble the nickel containing metallocenter of UreC. The UreE protein probably delivers the nickel.

Its subcellular location is the cytoplasm. In terms of biological role, required for maturation of urease via the functional incorporation of the urease nickel metallocenter. The polypeptide is Urease accessory protein UreD 1 (Brucella anthropi (strain ATCC 49188 / DSM 6882 / CCUG 24695 / JCM 21032 / LMG 3331 / NBRC 15819 / NCTC 12168 / Alc 37) (Ochrobactrum anthropi)).